Reading from the N-terminus, the 140-residue chain is 3-hydroxyacyl-[acyl-carrier-protein] dehydratase FabZ (140 aa).

The active site involves His47.

The protein belongs to the thioester dehydratase family. FabZ subfamily.

It is found in the cytoplasm. The enzyme catalyses a (3R)-hydroxyacyl-[ACP] = a (2E)-enoyl-[ACP] + H2O. Its function is as follows. Involved in unsaturated fatty acids biosynthesis. Catalyzes the dehydration of short chain beta-hydroxyacyl-ACPs and long chain saturated and unsaturated beta-hydroxyacyl-ACPs. This chain is 3-hydroxyacyl-[acyl-carrier-protein] dehydratase FabZ, found in Streptococcus equi subsp. equi (strain 4047).